The sequence spans 893 residues: TBC domain-containing protein kinase-like protein (893 aa).

The Protein kinase domain maps to 1 to 274 (MFPLRDTEMG…EELMHDHLFS (274 aa)). A Rab-GAP TBC domain is found at 466 to 651 (DIPPLLRGIT…HLWDTLLLGN (186 aa)). One can recognise a Rhodanese domain in the interval 790–889 (SKPKLLVVDI…IKPTGLLTVP (100 aa)).

This sequence belongs to the protein kinase superfamily. In terms of assembly, component of the FERRY complex.

Its subcellular location is the cytoplasm. The protein localises to the cytoskeleton. It is found in the spindle. The protein resides in the midbody. It localises to the early endosome. Component of the FERRY complex (Five-subunit Endosomal Rab5 and RNA/ribosome intermediary). The FERRY complex directly interacts with mRNAs and RAB5A, and functions as a RAB5A effector involved in the localization and the distribution of specific mRNAs most likely by mediating their endosomal transport. The complex recruits mRNAs and ribosomes to early endosomes through direct mRNA-interaction. Also involved in the modulation of mTOR signaling and expression of mTOR complex components. Involved in the control of actin-cytoskeleton organization. The chain is TBC domain-containing protein kinase-like protein from Gallus gallus (Chicken).